Here is a 329-residue protein sequence, read N- to C-terminus: GTP 3',8-cyclase (329 aa).

The Radical SAM core domain maps to 8–234 (AFARKFYYLR…QLRQRSDGPA (227 aa)). R17 serves as a coordination point for GTP. C24 and C28 together coordinate [4Fe-4S] cluster. Y30 contacts S-adenosyl-L-methionine. A [4Fe-4S] cluster-binding site is contributed by C31. Position 68 (R68) interacts with GTP. G72 contributes to the S-adenosyl-L-methionine binding site. T99 contacts GTP. Position 123 (S123) interacts with S-adenosyl-L-methionine. K160 provides a ligand contact to GTP. M194 is an S-adenosyl-L-methionine binding site. [4Fe-4S] cluster contacts are provided by C257 and C260. 262-264 (RLR) contributes to the GTP binding site. A [4Fe-4S] cluster-binding site is contributed by C274.

The protein belongs to the radical SAM superfamily. MoaA family. As to quaternary structure, monomer and homodimer. It depends on [4Fe-4S] cluster as a cofactor.

The catalysed reaction is GTP + AH2 + S-adenosyl-L-methionine = (8S)-3',8-cyclo-7,8-dihydroguanosine 5'-triphosphate + 5'-deoxyadenosine + L-methionine + A + H(+). The protein operates within cofactor biosynthesis; molybdopterin biosynthesis. Functionally, catalyzes the cyclization of GTP to (8S)-3',8-cyclo-7,8-dihydroguanosine 5'-triphosphate. The protein is GTP 3',8-cyclase of Escherichia coli O7:K1 (strain IAI39 / ExPEC).